A 550-amino-acid chain; its full sequence is (+)-germacrene D synthase (550 aa).

3 residues coordinate Mg(2+): aspartate 304, aspartate 308, and glutamate 455. Positions 304 to 308 match the DDXXD motif motif; that stretch reads DDIYD.

This sequence belongs to the terpene synthase family. Tpsa subfamily. The cofactor is Mg(2+). It depends on Mn(2+) as a cofactor. Co(2+) serves as cofactor. Requires Ni(2+) as cofactor.

The protein localises to the cytoplasm. The catalysed reaction is (2E,6E)-farnesyl diphosphate = (+)-germacrene D + diphosphate. It functions in the pathway secondary metabolite biosynthesis; terpenoid biosynthesis. Functionally, involved in the biosynthesis of germacrene D. Can use farnesyl diphosphate as substrate, but not geranyl diphosphate. Produces mainly (+)-germacrene D along with germacrene B and a number of minor by-products. The protein is (+)-germacrene D synthase of Zingiber officinale (Ginger).